We begin with the raw amino-acid sequence, 403 residues long: RUN domain-containing protein 3B (403 aa).

A disordered region spans residues 1-20 (MASRSLGGLSGSRGGGKKSL). Residue Arg13 is modified to Omega-N-methylarginine. In terms of domain architecture, RUN spans 53–185 (DDSSPEFNNF…IDFSFCLKGE (133 aa)). Residues 207–232 (SDSISSDEEELRTFGSSDSEGSTPEN) form a disordered region. A phosphoserine mark is found at Ser211 and Ser212. Residues 220 to 231 (FGSSDSEGSTPE) are compositionally biased toward polar residues. A coiled-coil region spans residues 296 to 321 (AHKLEKEQLEYIIVELQDQLKSYQSL).

It belongs to the RUNDC3 family. In terms of assembly, interacts with RAP2A.

The polypeptide is RUN domain-containing protein 3B (Rundc3b) (Rattus norvegicus (Rat)).